The chain runs to 313 residues: Homoserine O-succinyltransferase (313 aa).

Cysteine 142 acts as the Acyl-thioester intermediate in catalysis. Substrate contacts are provided by lysine 163 and serine 192. Histidine 235 serves as the catalytic Proton acceptor. The active site involves glutamate 237. A substrate-binding site is contributed by arginine 249.

Belongs to the MetA family.

It is found in the cytoplasm. It catalyses the reaction L-homoserine + succinyl-CoA = O-succinyl-L-homoserine + CoA. The protein operates within amino-acid biosynthesis; L-methionine biosynthesis via de novo pathway; O-succinyl-L-homoserine from L-homoserine: step 1/1. In terms of biological role, transfers a succinyl group from succinyl-CoA to L-homoserine, forming succinyl-L-homoserine. This Shewanella sp. (strain ANA-3) protein is Homoserine O-succinyltransferase.